A 126-amino-acid polypeptide reads, in one-letter code: Aspartate 1-decarboxylase (126 aa).

Ser-25 serves as the catalytic Schiff-base intermediate with substrate; via pyruvic acid. The residue at position 25 (Ser-25) is a Pyruvic acid (Ser). Thr-57 serves as a coordination point for substrate. The active-site Proton donor is the Tyr-58. 73 to 75 (GAA) is a substrate binding site.

It belongs to the PanD family. Heterooctamer of four alpha and four beta subunits. Pyruvate is required as a cofactor. Post-translationally, is synthesized initially as an inactive proenzyme, which is activated by self-cleavage at a specific serine bond to produce a beta-subunit with a hydroxyl group at its C-terminus and an alpha-subunit with a pyruvoyl group at its N-terminus.

Its subcellular location is the cytoplasm. The enzyme catalyses L-aspartate + H(+) = beta-alanine + CO2. Its pathway is cofactor biosynthesis; (R)-pantothenate biosynthesis; beta-alanine from L-aspartate: step 1/1. Its function is as follows. Catalyzes the pyruvoyl-dependent decarboxylation of aspartate to produce beta-alanine. This chain is Aspartate 1-decarboxylase, found in Escherichia coli O6:H1 (strain CFT073 / ATCC 700928 / UPEC).